The chain runs to 346 residues: MNIAILFGGSSFEHEISIVSAITMKKVLKKSTLTYIFVSADRKFYLIDTEKINSKLFSSGEYKKGKQLVLKNDGFFTKGMFGSKQVAFDVLLNLIHGRDGEDGKVASMMEFFNIPYISPRLEASAMSYNKLYTKFLAESLGVKTVPYEHLSKNGDRKISMEYPVIIKPVRLGSSIGVSIVKSEAELDYALDVAFEFDNDVIVEPFIDGVKEFNQAGCHTGDWELSIVEEPQKEEFLDFEKKYMDFSRDSQVLSADISEELKNNIQVTFKKIYDPLFMGSIIRCDFFVVNDEILLNEINPIPGSMANYLFPDFEGMVWRLSKALPKEKNISIDYTYIHSIQSAKGKA.

Residues 134-340 (KFLAESLGVK…IDYTYIHSIQ (207 aa)) form the ATP-grasp domain. 161 to 212 (EYPVIIKPVRLGSSIGVSIVKSEAELDYALDVAFEFDNDVIVEPFIDGVKEF) contributes to the ATP binding site. Mg(2+) is bound by residues D284, E296, and N298.

Belongs to the D-alanine--D-alanine ligase family. Requires Mg(2+) as cofactor. Mn(2+) serves as cofactor.

It is found in the cytoplasm. It carries out the reaction 2 D-alanine + ATP = D-alanyl-D-alanine + ADP + phosphate + H(+). It participates in cell wall biogenesis; peptidoglycan biosynthesis. Its function is as follows. Cell wall formation. The polypeptide is D-alanine--D-alanine ligase (Sulfurovum sp. (strain NBC37-1)).